The following is a 158-amino-acid chain: Ribosome maturation factor RimP (158 aa).

The protein belongs to the RimP family.

Its subcellular location is the cytoplasm. Required for maturation of 30S ribosomal subunits. The protein is Ribosome maturation factor RimP of Lactobacillus helveticus (strain DPC 4571).